Here is a 132-residue protein sequence, read N- to C-terminus: L-ectoine synthase (132 aa).

This sequence belongs to the ectoine synthase family.

The catalysed reaction is (2S)-4-acetamido-2-aminobutanoate = L-ectoine + H2O. Its pathway is amine and polyamine biosynthesis; ectoine biosynthesis; L-ectoine from L-aspartate 4-semialdehyde: step 3/3. In terms of biological role, catalyzes the circularization of gamma-N-acetyl-alpha,gamma-diaminobutyric acid (ADABA) to ectoine (1,4,5,6-tetrahydro-2-methyl-4-pyrimidine carboxylic acid), which is an excellent osmoprotectant. The polypeptide is L-ectoine synthase (Alkalilimnicola ehrlichii (strain ATCC BAA-1101 / DSM 17681 / MLHE-1)).